Reading from the N-terminus, the 139-residue chain is Endoribonuclease YbeY (139 aa).

The Zn(2+) site is built by His-99, His-103, and His-109.

Belongs to the endoribonuclease YbeY family. Requires Zn(2+) as cofactor.

Its subcellular location is the cytoplasm. Single strand-specific metallo-endoribonuclease involved in late-stage 70S ribosome quality control and in maturation of the 3' terminus of the 16S rRNA. This chain is Endoribonuclease YbeY, found in Sulfurimonas denitrificans (strain ATCC 33889 / DSM 1251) (Thiomicrospira denitrificans (strain ATCC 33889 / DSM 1251)).